Consider the following 374-residue polypeptide: Glutamate 5-kinase (374 aa).

K9 contributes to the ATP binding site. Substrate contacts are provided by S49, D136, and N148. ATP contacts are provided by residues 168–169 (TD) and 210–216 (TGGMRSK). One can recognise a PUA domain in the interval 276 to 354 (AGMITVDSGA…EEARQYSYLH (79 aa)).

Belongs to the glutamate 5-kinase family.

It is found in the cytoplasm. The catalysed reaction is L-glutamate + ATP = L-glutamyl 5-phosphate + ADP. It participates in amino-acid biosynthesis; L-proline biosynthesis; L-glutamate 5-semialdehyde from L-glutamate: step 1/2. Catalyzes the transfer of a phosphate group to glutamate to form L-glutamate 5-phosphate. This chain is Glutamate 5-kinase, found in Geobacillus kaustophilus (strain HTA426).